Consider the following 394-residue polypeptide: NAD(P)H-quinone oxidoreductase subunit H (394 aa).

It belongs to the complex I 49 kDa subunit family. As to quaternary structure, NDH-1 can be composed of about 15 different subunits; different subcomplexes with different compositions have been identified which probably have different functions.

Its subcellular location is the cellular thylakoid membrane. It catalyses the reaction a plastoquinone + NADH + (n+1) H(+)(in) = a plastoquinol + NAD(+) + n H(+)(out). The enzyme catalyses a plastoquinone + NADPH + (n+1) H(+)(in) = a plastoquinol + NADP(+) + n H(+)(out). Functionally, NDH-1 shuttles electrons from an unknown electron donor, via FMN and iron-sulfur (Fe-S) centers, to quinones in the respiratory and/or the photosynthetic chain. The immediate electron acceptor for the enzyme in this species is believed to be plastoquinone. Couples the redox reaction to proton translocation, and thus conserves the redox energy in a proton gradient. Cyanobacterial NDH-1 also plays a role in inorganic carbon-concentration. This Prochlorococcus marinus (strain NATL2A) protein is NAD(P)H-quinone oxidoreductase subunit H.